The chain runs to 332 residues: Putative ankyrin repeat protein R896 (332 aa).

5 ANK repeats span residues 159–188 (GNDN…NVKS), 190–218 (DNCA…NVKA), 219–248 (DGNY…DIKA), 249–278 (AQNL…NIST), and 280–308 (NDYV…DIFS).

This chain is Putative ankyrin repeat protein R896, found in Acanthamoeba polyphaga mimivirus (APMV).